The primary structure comprises 392 residues: ESX-1 secretion-associated protein EspA (392 aa).

The tract at residues 302–392 (TRQALRPRAD…GQKVLVRNVV (91 aa)) is disordered. A compositionally biased stretch (gly residues) spans 334–344 (QGMGGPVGMGG).

In terms of assembly, homodimer; disulfide-linked. An artificial EsxB-EsxA heterodimer interacts with EspA.

The protein resides in the secreted. In terms of biological role, required for secretion of EsxA (ESAT-6) and EsxB (CFP-10) and for virulence. Involved in translocation of bacteria from the host (human) phagolysosome to the host cytoplasm. This chain is ESX-1 secretion-associated protein EspA, found in Mycobacterium tuberculosis (strain ATCC 25618 / H37Rv).